The following is a 158-amino-acid chain: NAD(P)H-quinone oxidoreductase subunit J, chloroplastic (158 aa).

Belongs to the complex I 30 kDa subunit family. In terms of assembly, NDH is composed of at least 16 different subunits, 5 of which are encoded in the nucleus.

It is found in the plastid. It localises to the chloroplast thylakoid membrane. The catalysed reaction is a plastoquinone + NADH + (n+1) H(+)(in) = a plastoquinol + NAD(+) + n H(+)(out). It catalyses the reaction a plastoquinone + NADPH + (n+1) H(+)(in) = a plastoquinol + NADP(+) + n H(+)(out). Functionally, NDH shuttles electrons from NAD(P)H:plastoquinone, via FMN and iron-sulfur (Fe-S) centers, to quinones in the photosynthetic chain and possibly in a chloroplast respiratory chain. The immediate electron acceptor for the enzyme in this species is believed to be plastoquinone. Couples the redox reaction to proton translocation, and thus conserves the redox energy in a proton gradient. This is NAD(P)H-quinone oxidoreductase subunit J, chloroplastic from Lactuca sativa (Garden lettuce).